A 478-amino-acid chain; its full sequence is MTRFLFAIILGFLLTACQQVTVEETEYVPHKLTELRVGTLYGPQIYMTSGQGNSGFDYDMAVLFAEYLDVPLKMVPYTNRAELYEALKKNEIDIIAAGMTETPARREQFRLGPPLYRVNQVLVYREGMPTPKDITDLKGKITVIADSSFVETLTQLQKRHPTLVWDQVTDKDSEELLAMIANKEIDYTIADSSSVQINRRYLPDLRSGLVLEEKLDVVWLLPPTHSDGLMSQLLAFWHQEKLAGTLDHLNEKYFGHVKRFDYIDTRAFLRAIETVLPRYRQLFETHAGDLDWRKLAATSYQESHWNPNARSPTGVRGMMMLTQPTAKEIGITNRLDAEESIRGGAAYLRDMINRLPESIPESQRMWFALASYNIGYAHVEDARKLAESMELNPNAWRDLKKVLPLLQKRKYYQKTRYGYARGSEAVHYVDSIRRYYDTLVWVDNQSKQQNSDEEEPSDLASEDGPAPVPGTLSPDKPK.

Positions M1 to V22 are cleaved as a signal peptide. Residues E23 to V257 are non-LT domain. Residues K258–K478 are LT domain. Residue E302 is part of the active site. A disordered region spans residues S446–K478. Positions S451 to S461 are enriched in acidic residues.

The protein in the N-terminal section; belongs to the bacterial solute-binding protein 3 family. In the C-terminal section; belongs to the transglycosylase Slt family.

Its subcellular location is the cell outer membrane. It catalyses the reaction Exolytic cleavage of the (1-&gt;4)-beta-glycosidic linkage between N-acetylmuramic acid (MurNAc) and N-acetylglucosamine (GlcNAc) residues in peptidoglycan, from either the reducing or the non-reducing ends of the peptidoglycan chains, with concomitant formation of a 1,6-anhydrobond in the MurNAc residue.. Its function is as follows. Murein-degrading enzyme that degrades murein glycan strands and insoluble, high-molecular weight murein sacculi, with the concomitant formation of a 1,6-anhydromuramoyl product. Lytic transglycosylases (LTs) play an integral role in the metabolism of the peptidoglycan (PG) sacculus. Their lytic action creates space within the PG sacculus to allow for its expansion as well as for the insertion of various structures such as secretion systems and flagella. This Shewanella sp. (strain MR-4) protein is Membrane-bound lytic murein transglycosylase F.